The sequence spans 369 residues: MTGSLGYVETQRVVLAGPDDPLHLRGGGRLDHVEVAYETYGSLSPARDNAVFICHALTGDAHAAGLHVGSKKRGWWDNLIGPGKPVDTDRFFVISANLLGGCSGSTGPLSTDPATGAPYCLDFPMLHMSDLVAAHRRLVAHLGIERLHAAVGGSLGGMQVLQWVIDEPDALERAVLVAASSRLSPENIAFSAIGREAIMSDPDFCNGRYVEQGVFPWRGQKVARMMAHITYVSAQSLETKFGHRRRSRGDAWTLGPDYEVEHYLQHQGQVFLGRFDALSYLYLTRLLDYFDPFADPGTAAALRSTATRFQLTSFDSDWRFDSTQSARMTAELKALGVAVDWAELASPFGHDSFLLQPPGYHERIAEFLG.

One can recognise an AB hydrolase-1 domain in the interval 49–328 (NAVFICHALT…RFDSTQSARM (280 aa)). Catalysis depends on Ser-154, which acts as the Nucleophile. Arg-224 provides a ligand contact to substrate. Active-site residues include Asp-317 and His-350. Asp-351 is a substrate binding site.

This sequence belongs to the AB hydrolase superfamily. MetX family. As to quaternary structure, homodimer.

The protein localises to the cytoplasm. The enzyme catalyses L-homoserine + succinyl-CoA = O-succinyl-L-homoserine + CoA. It participates in amino-acid biosynthesis; L-methionine biosynthesis via de novo pathway; O-succinyl-L-homoserine from L-homoserine: step 1/1. Its function is as follows. Transfers a succinyl group from succinyl-CoA to L-homoserine, forming succinyl-L-homoserine. This Nocardioides sp. (strain ATCC BAA-499 / JS614) protein is Homoserine O-succinyltransferase.